Consider the following 352-residue polypeptide: Ferrochelatase (352 aa).

The Fe cation site is built by H222 and E303.

This sequence belongs to the ferrochelatase family.

It localises to the cytoplasm. It carries out the reaction heme b + 2 H(+) = protoporphyrin IX + Fe(2+). Its pathway is porphyrin-containing compound metabolism; protoheme biosynthesis; protoheme from protoporphyrin-IX: step 1/1. Catalyzes the ferrous insertion into protoporphyrin IX. The polypeptide is Ferrochelatase (Brucella canis (strain ATCC 23365 / NCTC 10854 / RM-666)).